Reading from the N-terminus, the 270-residue chain is Sorting nexin-11 (270 aa).

Residues 16–132 (VITVRVQDPR…HLFLQSQLSV (117 aa)) form the PX domain. 3 residues coordinate a 1,2-diacyl-sn-glycero-3-phospho-(1D-myo-inositol-3-phosphate): R59, K85, and R99. The interval 135 to 139 (IEACV) is important for membrane trafficking. The segment covering 168–177 (GSSHLAEGDQ) has biased composition (basic and acidic residues). 2 disordered regions span residues 168–244 (GSSH…LSAS) and 251–270 (LGGGHAVPLDPGQLETVLEK). Residues 218–227 (LESPTLPPTS) show a composition bias toward pro residues.

Belongs to the sorting nexin family. In terms of assembly, monomer. Interacts with TRPV3; this interaction promotes TRPV3 trafficking from the cell membrane to lysosome for degradation.

It localises to the cell membrane. The protein resides in the endosome. The protein localises to the cytoplasm. Its function is as follows. Phosphoinositide-binding protein involved in protein sorting and membrane trafficking in endosomes. Regulates the levels of TRPV3 by promoting its trafficking from the cell membrane to lysosome for degradation. The protein is Sorting nexin-11 (SNX11) of Bos taurus (Bovine).